The primary structure comprises 556 residues: MNRRLDNQRVIRAPHGSDISAKSWLTEAPLRMLMNNLDPDVAEKPSELIVYGGIGRAARDWDSFDRIVASLRKLEADQTLVVQSGKPVGIFRTHPDAPRVLIANSNIVPHWATLDHFNALDKMGLMMYGQMTAGSWIYIGSQGIVQGTYETFVEVGRRHYNGDLSGKWILTAGLGGMGGAQPLAATMAGASMLAVECQPSRIEMRLRTGYLDRQAASLDEALALMEEAARTKTAVSVGLLGNAAEIFPELVRRGVRPDIVTDQTSAHDPINGYLPKGWTLAEWEAKRASEPKAVEQASKTSMVGHVQAMLDFHAMGIPTLDYGNNIRQMAKDMGLANAFDFPGFVPAYIRPLFCRGIGPFRWAALSGDPEDIYKTDAKVKELLPDNKHLHNWLDMARQRIKFQGLPARICWVGLGDRHRLGLAFNEMVARGELKAPIVIGRDHLDSGSVASPNRETEAMKDGSDAVSDWPLLNALLNCASGATWVSLHHGGGVGIGYSQHAGMVIVADGTDDAARRLERVLWNDPATGVMRHADAGYDDAIGCAEANGLDLPSLAR.

NAD(+) contacts are provided by residues 52-53 (GG), Gln-130, 176-178 (GMG), Glu-196, Arg-201, 242-243 (NA), 263-267 (QTSAH), 273-274 (YL), and Tyr-322. Cys-410 is a catalytic residue. Gly-492 contacts NAD(+).

It belongs to the urocanase family. NAD(+) serves as cofactor.

Its subcellular location is the cytoplasm. The enzyme catalyses 4-imidazolone-5-propanoate = trans-urocanate + H2O. It functions in the pathway amino-acid degradation; L-histidine degradation into L-glutamate; N-formimidoyl-L-glutamate from L-histidine: step 2/3. In terms of biological role, catalyzes the conversion of urocanate to 4-imidazolone-5-propionate. This chain is Urocanate hydratase, found in Bradyrhizobium sp. (strain ORS 278).